The following is a 150-amino-acid chain: 3-hydroxyacyl-[acyl-carrier-protein] dehydratase FabZ (150 aa).

Residue H52 is part of the active site.

Belongs to the thioester dehydratase family. FabZ subfamily.

The protein localises to the cytoplasm. It catalyses the reaction a (3R)-hydroxyacyl-[ACP] = a (2E)-enoyl-[ACP] + H2O. Functionally, involved in unsaturated fatty acids biosynthesis. Catalyzes the dehydration of short chain beta-hydroxyacyl-ACPs and long chain saturated and unsaturated beta-hydroxyacyl-ACPs. In Albidiferax ferrireducens (strain ATCC BAA-621 / DSM 15236 / T118) (Rhodoferax ferrireducens), this protein is 3-hydroxyacyl-[acyl-carrier-protein] dehydratase FabZ.